Consider the following 335-residue polypeptide: Ketol-acid reductoisomerase (NADP(+)) (335 aa).

A KARI N-terminal Rossmann domain is found at 5–185; the sequence is SKIYTDKDSN…GATRAGVIPT (181 aa). NADP(+) contacts are provided by residues 28 to 31, serine 56, and 86 to 89; these read YGSQ and DMVQ. Residue histidine 111 is part of the active site. Residue glycine 137 participates in NADP(+) binding. The KARI C-terminal knotted domain occupies 186-331; that stretch reads TFKEETETDL…NQLKDLIQKG (146 aa). Mg(2+) contacts are provided by aspartate 194, glutamate 198, glutamate 230, and glutamate 234. Residue serine 255 participates in substrate binding.

The protein belongs to the ketol-acid reductoisomerase family. It depends on Mg(2+) as a cofactor.

The catalysed reaction is (2R)-2,3-dihydroxy-3-methylbutanoate + NADP(+) = (2S)-2-acetolactate + NADPH + H(+). It catalyses the reaction (2R,3R)-2,3-dihydroxy-3-methylpentanoate + NADP(+) = (S)-2-ethyl-2-hydroxy-3-oxobutanoate + NADPH + H(+). It participates in amino-acid biosynthesis; L-isoleucine biosynthesis; L-isoleucine from 2-oxobutanoate: step 2/4. Its pathway is amino-acid biosynthesis; L-valine biosynthesis; L-valine from pyruvate: step 2/4. Functionally, involved in the biosynthesis of branched-chain amino acids (BCAA). Catalyzes an alkyl-migration followed by a ketol-acid reduction of (S)-2-acetolactate (S2AL) to yield (R)-2,3-dihydroxy-isovalerate. In the isomerase reaction, S2AL is rearranged via a Mg-dependent methyl migration to produce 3-hydroxy-3-methyl-2-ketobutyrate (HMKB). In the reductase reaction, this 2-ketoacid undergoes a metal-dependent reduction by NADPH to yield (R)-2,3-dihydroxy-isovalerate. This is Ketol-acid reductoisomerase (NADP(+)) from Saccharolobus islandicus (strain Y.G.57.14 / Yellowstone #1) (Sulfolobus islandicus).